A 950-amino-acid chain; its full sequence is Protocadherin alpha-6 (950 aa).

The N-terminal stretch at 1-29 (MVFTPEDRLGKQCLLLPLLLLAAWKVGSG) is a signal peptide. Residues 30-697 (QLHYSVPEEA…GPEAALVDVN (668 aa)) lie on the Extracellular side of the membrane. Cadherin domains lie at 34 to 133 (SVPE…PPLF), 157 to 242 (ASDA…APNF), 243 to 350 (EQSE…VPEI), 351 to 455 (ALTS…APAF), 456 to 565 (AQPE…APAL), and 581 to 678 (VPRS…APKA). N-linked (GlcNAc...) asparagine glycosylation is found at Asn257, Asn265, Asn386, and Asn548. The chain crosses the membrane as a helical span at residues 698–718 (VYLIIAICAVSSLLVLTLLLY). Topologically, residues 719–950 (TALRCSAPST…GNSTTDNSDQ (232 aa)) are cytoplasmic. PXXP repeat units follow at residues 799-802 (PRQP), 832-835 (PGGP), 873-876 (PGNP), and 891-894 (PGSP). A 4 X 4 AA repeats of P-X-X-P region spans residues 799 to 894 (PRQPNPDWRY…PDKFIIPGSP (96 aa)). The segment at 830-889 (AGPGGPDQQWPTVSSATPEPEAGEVSPPVGAGVNSNSWTFKYGPGNPKQSGPGELPDKFI) is disordered. Residues 901 to 950 (QEPANSQIDKSDFITFGKKEETKKKKKKKKGNKTQEKKEKGNSTTDNSDQ) form a disordered region. Positions 909-923 (DKSDFITFGKKEETK) are enriched in basic and acidic residues.

The protein localises to the cell membrane. Functionally, potential calcium-dependent cell-adhesion protein. May be involved in the establishment and maintenance of specific neuronal connections in the brain. The protein is Protocadherin alpha-6 (PCDHA6) of Pan troglodytes (Chimpanzee).